The chain runs to 92 residues: Putative protein IntG (92 aa).

The protein belongs to the 'phage' integrase family.

This Escherichia coli (strain K12) protein is Putative protein IntG (intG).